The following is a 238-amino-acid chain: Large ribosomal subunit protein uL3 (238 aa).

An N5-methylglutamine modification is found at Q157.

It belongs to the universal ribosomal protein uL3 family. In terms of assembly, part of the 50S ribosomal subunit. Forms a cluster with proteins L14 and L19. Post-translationally, methylated by PrmB.

In terms of biological role, one of the primary rRNA binding proteins, it binds directly near the 3'-end of the 23S rRNA, where it nucleates assembly of the 50S subunit. This chain is Large ribosomal subunit protein uL3, found in Ruthia magnifica subsp. Calyptogena magnifica.